Here is a 441-residue protein sequence, read N- to C-terminus: ACT domain-containing protein ACR8 (441 aa).

4 ACT domains span residues 34–110 (IVKV…NIEV), 115–196 (ALEL…SAAK), 248–324 (VVNV…ALEG), and 326–405 (RLEL…TMYH).

Expressed in roots, leaves, flowers and siliques.

In terms of biological role, may bind amino acids. The chain is ACT domain-containing protein ACR8 from Arabidopsis thaliana (Mouse-ear cress).